Here is a 1863-residue protein sequence, read N- to C-terminus: E3 ubiquitin-protein ligase ubr3 (1863 aa).

The UBR-type zinc finger occupies 80 to 151; the sequence is TLCGLVWTAN…ESGFCNRHRL (72 aa). Disordered stretches follow at residues 302-330, 970-995, and 1128-1152; these read LDDS…SSTK, PEVE…SATF, and IPPK…RARE. Basic and acidic residues-rich tracts occupy residues 971-984 and 1134-1152; these read EVER…ERET and SPGD…RARE. Residues 1270-1328 form an RING-type; degenerate zinc finger; it reads DSSCLQSVSIGWDGGVYVQTCGHTLHIDCHKSYMESLRNDQVLQGISVDKGEFTCPLCR.

It belongs to the E3 ubiquitin-protein ligase UBR1-like family.

It carries out the reaction S-ubiquitinyl-[E2 ubiquitin-conjugating enzyme]-L-cysteine + [acceptor protein]-L-lysine = [E2 ubiquitin-conjugating enzyme]-L-cysteine + N(6)-ubiquitinyl-[acceptor protein]-L-lysine.. The protein operates within protein modification; protein ubiquitination. E3 ubiquitin-protein ligase which is a component of the N-end rule pathway. Recognizes and binds to proteins bearing specific N-terminal residues, leading to their ubiquitination and subsequent degradation. Positively regulates hedgehog/shh-signaling pathways that function in eye development, neuronal specification and somite development. Activation of shh up-regulates transcription of ubr3, which in turn promotes hedgehog/shh signaling possibly by controlling negative regulators such as Kif7. This chain is E3 ubiquitin-protein ligase ubr3, found in Danio rerio (Zebrafish).